The following is a 293-amino-acid chain: Diaminopimelate epimerase (293 aa).

Asparagine 17, glutamine 47, and asparagine 67 together coordinate substrate. Cysteine 76 functions as the Proton donor in the catalytic mechanism. Residues glycine 77 to asparagine 78, asparagine 164, asparagine 197, and glutamate 215 to arginine 216 each bind substrate. The Proton acceptor role is filled by cysteine 224. A substrate-binding site is contributed by glycine 225 to serine 226.

It belongs to the diaminopimelate epimerase family. Homodimer.

It is found in the cytoplasm. The catalysed reaction is (2S,6S)-2,6-diaminopimelate = meso-2,6-diaminopimelate. Its pathway is amino-acid biosynthesis; L-lysine biosynthesis via DAP pathway; DL-2,6-diaminopimelate from LL-2,6-diaminopimelate: step 1/1. Functionally, catalyzes the stereoinversion of LL-2,6-diaminopimelate (L,L-DAP) to meso-diaminopimelate (meso-DAP), a precursor of L-lysine and an essential component of the bacterial peptidoglycan. In Rhodopseudomonas palustris (strain TIE-1), this protein is Diaminopimelate epimerase.